Reading from the N-terminus, the 621-residue chain is UvrABC system protein C (621 aa).

One can recognise a GIY-YIG domain in the interval 20–98; that stretch reads MAPGVYCMYA…IKSLAPRYNV (79 aa). Residues 207–242 form the UVR domain; the sequence is DLLAEELIQAMQVASEHLEFEQAARLRDLLTSLRSM.

Belongs to the UvrC family. Interacts with UvrB in an incision complex.

It is found in the cytoplasm. The UvrABC repair system catalyzes the recognition and processing of DNA lesions. UvrC both incises the 5' and 3' sides of the lesion. The N-terminal half is responsible for the 3' incision and the C-terminal half is responsible for the 5' incision. This is UvrABC system protein C from Xylella fastidiosa (strain 9a5c).